The following is a 185-amino-acid chain: Transmembrane protein 252 (185 aa).

2 consecutive transmembrane segments (helical) span residues 8–28 (VLCA…GFFI) and 39–59 (LVVA…GIFW). Residues 125 to 149 (YTETSLEPQDKDKNDPQPEAPPPYP) are disordered.

It localises to the membrane. The protein is Transmembrane protein 252 (Tmem252) of Rattus norvegicus (Rat).